Here is a 513-residue protein sequence, read N- to C-terminus: Lysine--tRNA ligase (513 aa).

Residues Glu422 and Glu429 each coordinate Mg(2+).

Belongs to the class-II aminoacyl-tRNA synthetase family. In terms of assembly, homodimer. It depends on Mg(2+) as a cofactor.

It is found in the cytoplasm. It catalyses the reaction tRNA(Lys) + L-lysine + ATP = L-lysyl-tRNA(Lys) + AMP + diphosphate. The chain is Lysine--tRNA ligase from Tolumonas auensis (strain DSM 9187 / NBRC 110442 / TA 4).